The chain runs to 141 residues: Large ribosomal subunit protein uL16 (141 aa).

The protein belongs to the universal ribosomal protein uL16 family. In terms of assembly, part of the 50S ribosomal subunit.

Functionally, binds 23S rRNA and is also seen to make contacts with the A and possibly P site tRNAs. In Thermus thermophilus (strain ATCC BAA-163 / DSM 7039 / HB27), this protein is Large ribosomal subunit protein uL16.